Here is a 438-residue protein sequence, read N- to C-terminus: Chromosomal replication initiator protein DnaA (438 aa).

The segment at 1–71 is domain I, interacts with DnaA modulators; that stretch reads MTELDSLWEA…VEIVYQRTGQ (71 aa). Residues 71–101 are domain II; the sequence is QEIRPDYVLATDPTPLAQTPPRPQSTFKEET. The interval 81–100 is disordered; sequence TDPTPLAQTPPRPQSTFKEE. Positions 102 to 318 are domain III, AAA+ region; that stretch reads PLNPEYTFQT…GALMRIRVFS (217 aa). Residues G146, G148, K149, and T150 each contribute to the ATP site. Residues 319-438 form a domain IV, binds dsDNA region; it reads ELHQQPITLK…LVKLKNDLQA (120 aa).

The protein belongs to the DnaA family. As to quaternary structure, oligomerizes as a right-handed, spiral filament on DNA at oriC.

It localises to the cytoplasm. In terms of biological role, plays an essential role in the initiation and regulation of chromosomal replication. ATP-DnaA binds to the origin of replication (oriC) to initiate formation of the DNA replication initiation complex once per cell cycle. Binds the DnaA box (a 9 base pair repeat at the origin) and separates the double-stranded (ds)DNA. Forms a right-handed helical filament on oriC DNA; dsDNA binds to the exterior of the filament while single-stranded (ss)DNA is stabiized in the filament's interior. The ATP-DnaA-oriC complex binds and stabilizes one strand of the AT-rich DNA unwinding element (DUE), permitting loading of DNA polymerase. After initiation quickly degrades to an ADP-DnaA complex that is not apt for DNA replication. Binds acidic phospholipids. This Limosilactobacillus fermentum (strain NBRC 3956 / LMG 18251) (Lactobacillus fermentum) protein is Chromosomal replication initiator protein DnaA.